A 141-amino-acid polypeptide reads, in one-letter code: Large ribosomal subunit protein uL11 (141 aa).

Belongs to the universal ribosomal protein uL11 family. Part of the ribosomal stalk of the 50S ribosomal subunit. Interacts with L10 and the large rRNA to form the base of the stalk. L10 forms an elongated spine to which L12 dimers bind in a sequential fashion forming a multimeric L10(L12)X complex. Post-translationally, one or more lysine residues are methylated.

In terms of biological role, forms part of the ribosomal stalk which helps the ribosome interact with GTP-bound translation factors. The sequence is that of Large ribosomal subunit protein uL11 from Clostridium perfringens (strain ATCC 13124 / DSM 756 / JCM 1290 / NCIMB 6125 / NCTC 8237 / Type A).